Here is a 482-residue protein sequence, read N- to C-terminus: Tripartite motif-containing protein 10 (482 aa).

The segment at 16-61 (CPICQGTLREPVTIDCGHNFCCVCLTRYLEIPCLDPGELPTCPLCK) adopts an RING-type zinc-finger fold. The segment at 95-136 (EEEDVCLEHREKVYYFCEDDEMQLCVVCREAWEHRHHTVRFL) adopts a B box-type zinc-finger fold. Residues C100, H103, C122, and H128 each contribute to the Zn(2+) site. Residues 293-482 (REMKTFLEKL…GRGSKFSLSS (190 aa)) form the B30.2/SPRY domain.

It belongs to the TRIM/RBCC family. In terms of assembly, interacts with IFNAR1; this interaction prevents association of IFNAR1 with TYK2.

It localises to the cytoplasm. Functionally, E3 ligase that plays an essential role in the differentiation and survival of terminal erythroid cells. May directly bind to PTEN and promote its ubiquitination, resulting in its proteasomal degradation and activation of hypertrophic signaling. In addition, plays a role in immune response regulation by repressing the phosphorylation of STAT1 and STAT2 in the interferon/JAK/STAT signaling pathway independent of its E3 ligase activity. Mechanistically, interacts with the intracellular domain of IFNAR1 and thereby inhibits the association of TYK2 and IFNAR1. In Sus scrofa (Pig), this protein is Tripartite motif-containing protein 10 (TRIM10).